Consider the following 274-residue polypeptide: Type III pantothenate kinase (274 aa).

Residue 6–13 (DVRNTHTV) participates in ATP binding. Residue 109–112 (GADR) coordinates substrate. Aspartate 111 serves as the catalytic Proton acceptor. A K(+)-binding site is contributed by aspartate 131. Serine 134 is a binding site for ATP. Threonine 186 is a substrate binding site.

This sequence belongs to the type III pantothenate kinase family. In terms of assembly, homodimer. Requires NH4(+) as cofactor. The cofactor is K(+).

It is found in the cytoplasm. It carries out the reaction (R)-pantothenate + ATP = (R)-4'-phosphopantothenate + ADP + H(+). It participates in cofactor biosynthesis; coenzyme A biosynthesis; CoA from (R)-pantothenate: step 1/5. Its function is as follows. Catalyzes the phosphorylation of pantothenate (Pan), the first step in CoA biosynthesis. This chain is Type III pantothenate kinase, found in Mycobacterium leprae (strain Br4923).